We begin with the raw amino-acid sequence, 338 residues long: Porphobilinogen deaminase (338 aa).

S-(dipyrrolylmethanemethyl)cysteine is present on cysteine 265.

Belongs to the HMBS family. It depends on dipyrromethane as a cofactor.

The catalysed reaction is 4 porphobilinogen + H2O = hydroxymethylbilane + 4 NH4(+). It functions in the pathway porphyrin-containing compound metabolism; protoporphyrin-IX biosynthesis; coproporphyrinogen-III from 5-aminolevulinate: step 2/4. Tetrapolymerization of the monopyrrole PBG into the hydroxymethylbilane pre-uroporphyrinogen in several discrete steps. The protein is Porphobilinogen deaminase (HEM3) of Yarrowia lipolytica (strain CLIB 122 / E 150) (Yeast).